A 407-amino-acid chain; its full sequence is 45 kDa calcium-binding protein (407 aa).

An N-terminal signal peptide occupies residues 1 to 35 (MVWSWVAMASRWGPLVGLAPRCLWLLGAVLLMDAS). Asn40 carries an N-linked (GlcNAc...) asparagine glycan. EF-hand domains are found at residues 98–133 (RSRRKLMVIFSKVDVNTDRKISAKEMQRWIMEKTAE) and 137–172 (EAMEESKTHFRAVDPDGDGHVSWDEYKVKFLASKGH). Ser99 is subject to Phosphoserine. 10 residues coordinate Ca(2+): Asp111, Asn113, Asp115, Lys117, Glu122, Asp150, Asp152, Asp154, His156, and Glu161. Residues Thr193 and Thr217 each carry the phosphothreonine modification. Residues 249–259 (GSSLAGAPGPG) show a composition bias toward low complexity. The segment at 249–282 (GSSLAGAPGPGDQRQGPGIAGKSGKVLREPQPGC) is disordered. Ca(2+)-binding residues include Asp291, Asp293, Asp295, Gln297, and Glu302. EF-hand domains follow at residues 291–313 (DQDGDKQLSLPEFVSLPVGTVEN), 323–358 (WVKDRKKEFEELIDSNHDGIVTAEELESYMDPMNEY), and 359–394 (NALNEAKQMIAVADENQNHHLEPEEVLKYSEFFTGS). Position 310 is a phosphothreonine (Thr310). Asp336, Asn338, and Asp340 together coordinate Ca(2+). Thr344 bears the Phosphothreonine mark. 6 residues coordinate Ca(2+): Glu347, Asp372, Asn374, Asn376, His378, and Glu383. Residues 354-407 (PMNEYNALNEAKQMIAVADENQNHHLEPEEVLKYSEFFTGSKLVDYARSVHEEF) are necessary for intracellular retention in Golgi apparatus lumen.

This sequence belongs to the CREC family.

The protein resides in the golgi apparatus lumen. In terms of biological role, may regulate calcium-dependent activities in the endoplasmic reticulum lumen or post-ER compartment. The protein is 45 kDa calcium-binding protein (SDF4) of Macaca fascicularis (Crab-eating macaque).